Here is a 399-residue protein sequence, read N- to C-terminus: A-type ATP synthase subunit C (399 aa).

It belongs to the V-ATPase V0D/AC39 subunit family. The A-type ATPase is composed of subunits A(3), B(3), C, D, E(1 or 2), F, H(2), I and K(x).

The protein localises to the cell membrane. Functionally, component of the A-type ATP synthase that produces ATP from ADP in the presence of a proton gradient across the membrane. The chain is A-type ATP synthase subunit C from Methanocaldococcus jannaschii (strain ATCC 43067 / DSM 2661 / JAL-1 / JCM 10045 / NBRC 100440) (Methanococcus jannaschii).